The primary structure comprises 265 residues: Short chain dehydrogenase mdpC (265 aa).

NADP(+)-binding residues include Ile-25, Asn-98, and Arg-131. Residues Ser-147 and Ser-148 each act as proton donor in the active site. Tyr-162, Lys-166, and Thr-197 together coordinate NADP(+). Tyr-162 (proton acceptor) is an active-site residue. Lys-166 acts as the Lowers pKa of active site Tyr in catalysis.

It belongs to the short-chain dehydrogenases/reductases (SDR) family.

The catalysed reaction is 3,8,9,10-tetrahydroxy-6-methyl-1,4-dihydroanthracen-1-one + NADPH + H(+) = (3R)-3,8,9,10-tetrahydroxy-6-methyl-1,2,3,4-tetrahydroanthracen-1-one + NADP(+). Its pathway is secondary metabolite biosynthesis. In terms of biological role, short chain dehydrogenase; part of the gene cluster that mediates the biosynthesis of monodictyphenone, a prenyl xanthone derivative. The pathway begins with the synthesis of atrochrysone thioester by the polyketide synthase (PKS) mdpG. The atrochrysone carboxyl ACP thioesterase mdpF then breaks the thioester bond and releases the atrochrysone carboxylic acid from mdpG. The atrochrysone carboxylic acid is then converted to atrochrysone which is further transformed into emodin anthrone. The next step is performed by the anthrone oxygenase mdpH that catalyzes the oxidation of emodinanthrone to emodin. Emodin is further modified to yield monodictyphenone via several steps involving mdpB, mdpC mdpJ, mdpK and mdpL. The short chain dehydrogenase mdpC converts the tautomers of emodin hydroquinone into the 3-hydroxy-3,4-dihydroan-thracen-1(2H)-one derivative. These enzymes with xptA, xptB and xptC are also proposed to be involved in the synthesis of shamixanthone from emodin. Especially, direct reduction of emodin by the short chain dehydrogenase mdpC followed by dehydration catalyzed by the scytalone dehydratase-like protein mdpB gives loss of oxygen and formation of chrysophanol intermediate in two simple steps. This is Short chain dehydrogenase mdpC from Emericella nidulans (strain FGSC A4 / ATCC 38163 / CBS 112.46 / NRRL 194 / M139) (Aspergillus nidulans).